A 983-amino-acid polypeptide reads, in one-letter code: Nitrate reductase [NADPH] (983 aa).

Composition is skewed to low complexity over residues 1–14 and 26–48; these read MTISTTSSSTSSKT and SSSSSPASSRSSSATTPEPSSPT. Residues 1 to 50 form a disordered region; sequence MTISTTSSSTSSKTSSEKGDDLKGFSSSSSPASSRSSSATTPEPSSPTVL. A Mo-molybdopterin-binding site is contributed by cysteine 184. The region spanning 585–662 is the Cytochrome b5 heme-binding domain; that stretch reads DTIITAADLA…LRDFHLGRLE (78 aa). Histidine 622 and histidine 645 together coordinate heme. An FAD-binding FR-type domain is found at 688-815; it reads KKWRATRLVS…KGPLGSFTYL (128 aa). Residues 746–749, 763–767, phenylalanine 768, phenylalanine 780, 784–786, serine 841, and threonine 844 each bind FAD; these read RAYT, LIKVY, and KMT. NADP(+) is bound at residue 952-961; the sequence is LALVCGPPPM.

Belongs to the nitrate reductase family. As to quaternary structure, homodimer. FAD is required as a cofactor. It depends on heme as a cofactor. Requires Mo-molybdopterin as cofactor.

The enzyme catalyses nitrite + NADP(+) + H2O = nitrate + NADPH + H(+). It functions in the pathway nitrogen metabolism; nitrate reduction (assimilation). In terms of biological role, nitrate reductase is a key enzyme involved in the first step of nitrate assimilation in plants, fungi and bacteria. The protein is Nitrate reductase [NADPH] (NAR1) of Mycosarcoma maydis (Corn smut fungus).